A 321-amino-acid polypeptide reads, in one-letter code: Electron transfer flavoprotein subunit alpha (321 aa).

14 residues coordinate FAD: Arg-211, Ser-236, Arg-237, Gln-250, Val-251, Ser-254, Gly-255, Ser-270, Ser-272, Gln-274, His-275, Asn-289, Asp-307, and Ile-308.

As to quaternary structure, heterodimer of an alpha and a beta subunit. Forms a ternary complex with trimethylamine dehydrogenase. It depends on FAD as a cofactor.

Heterodimeric electron transfer flavoprotein that accepts electrons from trimethylamine dehydrogenase. It transfers the electrons to the main respiratory chain via ETF-ubiquinone oxidoreductase (ETF dehydrogenase). This Methylophilus methylotrophus (Bacterium W3A1) protein is Electron transfer flavoprotein subunit alpha (etfA).